Reading from the N-terminus, the 474-residue chain is Aspartyl/glutamyl-tRNA(Asn/Gln) amidotransferase subunit B (474 aa).

Belongs to the GatB/GatE family. GatB subfamily. In terms of assembly, heterotrimer of A, B and C subunits.

It catalyses the reaction L-glutamyl-tRNA(Gln) + L-glutamine + ATP + H2O = L-glutaminyl-tRNA(Gln) + L-glutamate + ADP + phosphate + H(+). The enzyme catalyses L-aspartyl-tRNA(Asn) + L-glutamine + ATP + H2O = L-asparaginyl-tRNA(Asn) + L-glutamate + ADP + phosphate + 2 H(+). Functionally, allows the formation of correctly charged Asn-tRNA(Asn) or Gln-tRNA(Gln) through the transamidation of misacylated Asp-tRNA(Asn) or Glu-tRNA(Gln) in organisms which lack either or both of asparaginyl-tRNA or glutaminyl-tRNA synthetases. The reaction takes place in the presence of glutamine and ATP through an activated phospho-Asp-tRNA(Asn) or phospho-Glu-tRNA(Gln). This Helicobacter hepaticus (strain ATCC 51449 / 3B1) protein is Aspartyl/glutamyl-tRNA(Asn/Gln) amidotransferase subunit B.